We begin with the raw amino-acid sequence, 336 residues long: D-alanine--D-alanine ligase (336 aa).

Residues 124 to 330 (KMWFSALGVP…FTEYLIDVIG (207 aa)) enclose the ATP-grasp domain. ATP is bound at residue 154–209 (AFDNWGSVFVKAASQGSSVGCYKVDVKANIANVLKDAFSYAPYVVVEQTIHARELE). Mg(2+)-binding residues include D284, E297, and N299.

This sequence belongs to the D-alanine--D-alanine ligase family. It depends on Mg(2+) as a cofactor. Mn(2+) is required as a cofactor.

Its subcellular location is the cytoplasm. It catalyses the reaction 2 D-alanine + ATP = D-alanyl-D-alanine + ADP + phosphate + H(+). It functions in the pathway cell wall biogenesis; peptidoglycan biosynthesis. Cell wall formation. The chain is D-alanine--D-alanine ligase from Shewanella frigidimarina (strain NCIMB 400).